The following is a 395-amino-acid chain: S-adenosylmethionine synthase (395 aa).

H16 contacts ATP. D18 is a binding site for Mg(2+). E44 serves as a coordination point for K(+). L-methionine is bound by residues E57 and Q100. The flexible loop stretch occupies residues 100-110 (QSPDIAQGVDR). ATP is bound by residues 167-169 (DAK), 233-234 (RF), D242, 248-249 (RK), A265, and K269. D242 is an L-methionine binding site. Residue K273 coordinates L-methionine.

The protein belongs to the AdoMet synthase family. In terms of assembly, homotetramer; dimer of dimers. Mg(2+) is required as a cofactor. Requires K(+) as cofactor.

Its subcellular location is the cytoplasm. It carries out the reaction L-methionine + ATP + H2O = S-adenosyl-L-methionine + phosphate + diphosphate. Its pathway is amino-acid biosynthesis; S-adenosyl-L-methionine biosynthesis; S-adenosyl-L-methionine from L-methionine: step 1/1. In terms of biological role, catalyzes the formation of S-adenosylmethionine (AdoMet) from methionine and ATP. The overall synthetic reaction is composed of two sequential steps, AdoMet formation and the subsequent tripolyphosphate hydrolysis which occurs prior to release of AdoMet from the enzyme. The protein is S-adenosylmethionine synthase of Paraburkholderia phymatum (strain DSM 17167 / CIP 108236 / LMG 21445 / STM815) (Burkholderia phymatum).